The sequence spans 405 residues: S-adenosylmethionine synthase (405 aa).

Histidine 19 serves as a coordination point for ATP. Residue aspartate 21 participates in Mg(2+) binding. Position 47 (glutamate 47) interacts with K(+). L-methionine-binding residues include glutamate 60 and glutamine 103. The interval glutamine 103 to lysine 113 is flexible loop. Residues aspartate 179–lysine 181, arginine 246–phenylalanine 247, aspartate 255, arginine 261–lysine 262, alanine 278, and lysine 282 each bind ATP. Aspartate 255 is an L-methionine binding site. Position 286 (lysine 286) interacts with L-methionine.

It belongs to the AdoMet synthase family. In terms of assembly, homotetramer; dimer of dimers. Mg(2+) serves as cofactor. It depends on K(+) as a cofactor.

It is found in the cytoplasm. It carries out the reaction L-methionine + ATP + H2O = S-adenosyl-L-methionine + phosphate + diphosphate. It functions in the pathway amino-acid biosynthesis; S-adenosyl-L-methionine biosynthesis; S-adenosyl-L-methionine from L-methionine: step 1/1. In terms of biological role, catalyzes the formation of S-adenosylmethionine (AdoMet) from methionine and ATP. The overall synthetic reaction is composed of two sequential steps, AdoMet formation and the subsequent tripolyphosphate hydrolysis which occurs prior to release of AdoMet from the enzyme. In Shouchella clausii (strain KSM-K16) (Alkalihalobacillus clausii), this protein is S-adenosylmethionine synthase.